Reading from the N-terminus, the 122-residue chain is MFLTFSMCVNWIIVKMPNRSEELDRLLDKIINSPHRTEASKTLQEIENNQSYILNVQLKKLLRLHDDSFKNKCVSPINYMLEKYTPYMGHTEALQKEAELVDRDLRIIEMTYQLIKKNRNSK.

At S33 the chain carries Phosphoserine.

This sequence belongs to the BLOC1S1 family. Component of the biogenesis of lysosome-related organelles complex-1 (BLOC-1) composed of at least BLI1, BLS1, CNL1, KXD1, SNN1 and VAB2.

It localises to the endosome. Component of the biogenesis of lysosome-related organelles complex-1 (BLOC-1), a complex involved in endosomal cargo sorting. The sequence is that of Biogenesis of lysosome-related organelles complex 1 subunit BLS1 (BLS1) from Saccharomyces cerevisiae (strain YJM789) (Baker's yeast).